Consider the following 110-residue polypeptide: MDKNILAIIFVAVGTYLIRYIPIHLHSKIKNIDEKVKEINEILIYSSTSVISALFITSFIKFPIIFSNVLISTISLIFAIVSYKKWNNLGISILISVVIYYLASKFLISI.

3 helical membrane-spanning segments follow: residues 5–25 (ILAI…PIHL), 62–82 (FPII…AIVS), and 90–110 (GISI…LISI).

It to A.fulgidus AF1754.

It is found in the cell membrane. This is an uncharacterized protein from Methanocaldococcus jannaschii (strain ATCC 43067 / DSM 2661 / JAL-1 / JCM 10045 / NBRC 100440) (Methanococcus jannaschii).